The primary structure comprises 345 residues: D(2) dopamine receptor B (345 aa).

The Extracellular segment spans residues 1–10; sequence EWRFSRIHCD. An intrachain disulfide couples C9 to C84. The chain crosses the membrane as a helical span at residues 11–32; that stretch reads IFVTLDVMMCTASILNLCAISI. The Cytoplasmic portion of the chain corresponds to 33-53; the sequence is DRYTAVAMPMLYNTRYSSKRR. The chain crosses the membrane as a helical span at residues 54–74; sequence VTVMISVVWVLSFAISCPLLF. Residues 75 to 90 are Extracellular-facing; it reads GLNNTASTVCIIDNPA. The N-linked (GlcNAc...) asparagine glycan is linked to N77. The chain crosses the membrane as a helical span at residues 91-115; it reads FVIYSSIVSFYVPFIVTLLVYVQIY. Residues 116-275 are Cytoplasmic-facing; the sequence is IVLRKRRKRV…SQHKEKKATQ (160 aa). Positions 166–177 are enriched in basic and acidic residues; the sequence is KKKVEAGNHPED. The interval 166–199 is disordered; that stretch reads KKKVEAGNHPEDMEMEMMSSTSPPEKTKHKSASP. The helical transmembrane segment at 276 to 297 threads the bilayer; the sequence is MLAIVLGVFIICWLPFFITHIL. The Extracellular segment spans residues 298 to 311; it reads NMHCNCNIPQALYS. A disulfide bond links C301 and C303. The helical transmembrane segment at 312–333 threads the bilayer; sequence AFTWLGYVNSAVNPIIYTTFNV. The Cytoplasmic portion of the chain corresponds to 334–345; the sequence is EFRKAFIKILHC. A lipid anchor (S-palmitoyl cysteine) is attached at C345.

This sequence belongs to the G-protein coupled receptor 1 family. Palmitoylated. Palmitoylation is probably required for proper localization to the plasma membrane and stability of the receptor. Brain; pituitary.

Its subcellular location is the cell membrane. The protein localises to the golgi apparatus membrane. This is one of the five types (D1 to D5) of receptors for dopamine. The activity of this receptor is mediated by G proteins which inhibits adenylyl cyclase. In Xenopus D2R is involved in the regulation of the melanotrope cells of the intermediate pituitary during background adaptation of the animal. The chain is D(2) dopamine receptor B (drd2-b) from Xenopus laevis (African clawed frog).